The chain runs to 147 residues: Endoribonuclease YbeY (147 aa).

Residues histidine 111, histidine 115, and aspartate 121 each coordinate Zn(2+).

The protein belongs to the endoribonuclease YbeY family. It depends on Zn(2+) as a cofactor.

The protein resides in the cytoplasm. Functionally, single strand-specific metallo-endoribonuclease involved in late-stage 70S ribosome quality control and in maturation of the 3' terminus of the 16S rRNA. The chain is Endoribonuclease YbeY from Amoebophilus asiaticus (strain 5a2).